A 57-amino-acid polypeptide reads, in one-letter code: Large ribosomal subunit protein bL33 (57 aa).

The protein belongs to the bacterial ribosomal protein bL33 family.

The protein is Large ribosomal subunit protein bL33 of Bifidobacterium longum (strain NCC 2705).